Reading from the N-terminus, the 444-residue chain is Trigger factor (444 aa).

One can recognise a PPIase FKBP-type domain in the interval 166 to 251; that stretch reads GDQVVIDFKG…VKAVKAPKAA (86 aa).

The protein belongs to the FKBP-type PPIase family. Tig subfamily.

The protein resides in the cytoplasm. It carries out the reaction [protein]-peptidylproline (omega=180) = [protein]-peptidylproline (omega=0). Its function is as follows. Involved in protein export. Acts as a chaperone by maintaining the newly synthesized protein in an open conformation. Functions as a peptidyl-prolyl cis-trans isomerase. This chain is Trigger factor, found in Cereibacter sphaeroides (strain KD131 / KCTC 12085) (Rhodobacter sphaeroides).